The chain runs to 297 residues: tRNA dimethylallyltransferase (297 aa).

Residue 15–22 (GPTASGKS) participates in ATP binding. 17 to 22 (TASGKS) serves as a coordination point for substrate. Interaction with substrate tRNA stretches follow at residues 40-43 (DSMQ) and 164-168 (QRIVR).

Belongs to the IPP transferase family. Monomer. Requires Mg(2+) as cofactor.

It carries out the reaction adenosine(37) in tRNA + dimethylallyl diphosphate = N(6)-dimethylallyladenosine(37) in tRNA + diphosphate. Catalyzes the transfer of a dimethylallyl group onto the adenine at position 37 in tRNAs that read codons beginning with uridine, leading to the formation of N6-(dimethylallyl)adenosine (i(6)A). This is tRNA dimethylallyltransferase from Rhizobium etli (strain ATCC 51251 / DSM 11541 / JCM 21823 / NBRC 15573 / CFN 42).